The sequence spans 533 residues: D-3-phosphoglycerate dehydrogenase (533 aa).

Residue Ala2 is modified to N-acetylalanine. Ser14 is modified (phosphoserine). Lys21 carries the N6-acetyllysine; alternate modification. Residue Lys21 forms a Glycyl lysine isopeptide (Lys-Gly) (interchain with G-Cter in SUMO1); alternate linkage. A Glycyl lysine isopeptide (Lys-Gly) (interchain with G-Cter in SUMO2); alternate cross-link involves residue Lys21. Lys58 is subject to N6-acetyllysine. NAD(+) is bound by residues Thr78, 155 to 156 (RI), Asp175, Thr207, 234 to 236 (CAR), and Asp260. Phosphothreonine is present on Thr78. Arg236 is an active-site residue. Residue Glu265 is part of the active site. His283 (proton donor) is an active-site residue. 283–286 (HLGA) lines the NAD(+) pocket.

This sequence belongs to the D-isomer specific 2-hydroxyacid dehydrogenase family. Homotetramer.

It catalyses the reaction (2R)-3-phosphoglycerate + NAD(+) = 3-phosphooxypyruvate + NADH + H(+). It carries out the reaction (R)-2-hydroxyglutarate + NAD(+) = 2-oxoglutarate + NADH + H(+). The enzyme catalyses (S)-malate + NAD(+) = oxaloacetate + NADH + H(+). Its pathway is amino-acid biosynthesis; L-serine biosynthesis; L-serine from 3-phospho-D-glycerate: step 1/3. Functionally, catalyzes the reversible oxidation of 3-phospho-D-glycerate to 3-phosphonooxypyruvate, the first step of the phosphorylated L-serine biosynthesis pathway. Also catalyzes the reversible oxidation of 2-hydroxyglutarate to 2-oxoglutarate and the reversible oxidation of (S)-malate to oxaloacetate. The protein is D-3-phosphoglycerate dehydrogenase (PHGDH) of Pan troglodytes (Chimpanzee).